We begin with the raw amino-acid sequence, 147 residues long: D-aminoacyl-tRNA deacylase (147 aa).

The short motif at 136 to 137 is the Gly-cisPro motif, important for rejection of L-amino acids element; it reads GP.

The protein belongs to the DTD family. As to quaternary structure, homodimer.

It is found in the cytoplasm. The enzyme catalyses glycyl-tRNA(Ala) + H2O = tRNA(Ala) + glycine + H(+). It catalyses the reaction a D-aminoacyl-tRNA + H2O = a tRNA + a D-alpha-amino acid + H(+). In terms of biological role, an aminoacyl-tRNA editing enzyme that deacylates mischarged D-aminoacyl-tRNAs. Also deacylates mischarged glycyl-tRNA(Ala), protecting cells against glycine mischarging by AlaRS. Acts via tRNA-based rather than protein-based catalysis; rejects L-amino acids rather than detecting D-amino acids in the active site. By recycling D-aminoacyl-tRNA to D-amino acids and free tRNA molecules, this enzyme counteracts the toxicity associated with the formation of D-aminoacyl-tRNA entities in vivo and helps enforce protein L-homochirality. The chain is D-aminoacyl-tRNA deacylase from Streptococcus equi subsp. zooepidemicus (strain MGCS10565).